Here is a 399-residue protein sequence, read N- to C-terminus: Transferrin receptor subunit ESAG6 (399 aa).

The N-terminal stretch at 1–17 is a signal peptide; that stretch reads MRFWFVLLALLGKEIYA. 2 N-linked (GlcNAc...) asparagine glycosylation sites follow: asparagine 26 and asparagine 110. Intrachain disulfides connect cysteine 34/cysteine 161, cysteine 84/cysteine 312, and cysteine 144/cysteine 215. Asparagine 235, asparagine 250, and asparagine 360 each carry an N-linked (GlcNAc...) asparagine glycan. A lipid anchor (GPI-anchor amidated asparagine) is attached at asparagine 376. A propeptide spans 377–399 (removed in mature form); the sequence is AAAIHLSVSTAALCRSALLLGVL.

As to quaternary structure, heterodimer composed of ESAG6 and ESAG7. N-glycosylated. Glycosylation is dispensable for heterodimer formation and host transferrin binding.

The protein localises to the cell membrane. The protein resides in the flagellar pocket. Transferrin receptor subunit involved in receptor-mediated acquisition of iron from the environment by binding host TF/transferrin. The sequence is that of Transferrin receptor subunit ESAG6 from Trypanosoma brucei brucei.